Reading from the N-terminus, the 70-residue chain is Cold shock-like protein CspH (70 aa).

A CSD domain is found at 7-67 (GIVKTFDRKS…GLRGPTAANV (61 aa)).

The protein localises to the cytoplasm. This Escherichia coli O6:H1 (strain CFT073 / ATCC 700928 / UPEC) protein is Cold shock-like protein CspH (cspH).